Consider the following 531-residue polypeptide: Arginine--tRNA ligase (531 aa).

The 'HIGH' region signature appears at 113–123 (ANPTGPLHIGH).

It belongs to the class-I aminoacyl-tRNA synthetase family. Monomer.

It is found in the cytoplasm. The catalysed reaction is tRNA(Arg) + L-arginine + ATP = L-arginyl-tRNA(Arg) + AMP + diphosphate. The polypeptide is Arginine--tRNA ligase (Campylobacter fetus subsp. fetus (strain 82-40)).